The following is a 253-amino-acid chain: Electron transfer flavoprotein subunit beta, mitochondrial (253 aa).

This sequence belongs to the ETF beta-subunit/FixA family. In terms of assembly, heterodimer of an alpha and a beta subunit. FAD serves as cofactor. Requires AMP as cofactor.

Its subcellular location is the mitochondrion matrix. The electron transfer flavoprotein serves as a specific electron acceptor for several dehydrogenases, including five acyl-CoA dehydrogenases, glutaryl-CoA and sarcosine dehydrogenase. It transfers the electrons to the main mitochondrial respiratory chain via ETF-ubiquinone oxidoreductase (ETF dehydrogenase). The chain is Electron transfer flavoprotein subunit beta, mitochondrial (ETFB) from Oryza sativa subsp. indica (Rice).